A 44-amino-acid chain; its full sequence is Defensin-like protein 1 (44 aa).

The residue at position 1 (glutamine 1) is a Pyrrolidone carboxylic acid. Cysteine 15 and cysteine 36 are joined by a disulfide.

Belongs to the DEFL family. Forms oligomers in its native state.

It localises to the secreted. In terms of biological role, possesses antifungal activity sensitive to inorganic cations. The protein is Defensin-like protein 1 (AFP1) of Brassica napus (Rape).